A 166-amino-acid polypeptide reads, in one-letter code: NAD(P)H-quinone oxidoreductase subunit I, chloroplastic (166 aa).

2 4Fe-4S ferredoxin-type domains span residues 55–84 and 95–124; these read GRIH…VDWK and LNYS…MTEE. 8 residues coordinate [4Fe-4S] cluster: Cys-64, Cys-67, Cys-70, Cys-74, Cys-104, Cys-107, Cys-110, and Cys-114.

Belongs to the complex I 23 kDa subunit family. As to quaternary structure, NDH is composed of at least 16 different subunits, 5 of which are encoded in the nucleus. Requires [4Fe-4S] cluster as cofactor.

It localises to the plastid. The protein resides in the chloroplast thylakoid membrane. It catalyses the reaction a plastoquinone + NADH + (n+1) H(+)(in) = a plastoquinol + NAD(+) + n H(+)(out). The catalysed reaction is a plastoquinone + NADPH + (n+1) H(+)(in) = a plastoquinol + NADP(+) + n H(+)(out). Functionally, NDH shuttles electrons from NAD(P)H:plastoquinone, via FMN and iron-sulfur (Fe-S) centers, to quinones in the photosynthetic chain and possibly in a chloroplast respiratory chain. The immediate electron acceptor for the enzyme in this species is believed to be plastoquinone. Couples the redox reaction to proton translocation, and thus conserves the redox energy in a proton gradient. In Parthenium hysterophorus (Santa Maria feverfew), this protein is NAD(P)H-quinone oxidoreductase subunit I, chloroplastic.